The sequence spans 137 residues: NADPH-dependent 7-cyano-7-deazaguanine reductase (137 aa).

C50 acts as the Thioimide intermediate in catalysis. D57 acts as the Proton donor in catalysis. Substrate contacts are provided by residues 72–74 (VEL) and 91–92 (HE).

It belongs to the GTP cyclohydrolase I family. QueF type 1 subfamily.

It is found in the cytoplasm. The catalysed reaction is 7-aminomethyl-7-carbaguanine + 2 NADP(+) = 7-cyano-7-deazaguanine + 2 NADPH + 3 H(+). It functions in the pathway tRNA modification; tRNA-queuosine biosynthesis. In terms of biological role, catalyzes the NADPH-dependent reduction of 7-cyano-7-deazaguanine (preQ0) to 7-aminomethyl-7-deazaguanine (preQ1). The sequence is that of NADPH-dependent 7-cyano-7-deazaguanine reductase from Synechocystis sp. (strain ATCC 27184 / PCC 6803 / Kazusa).